The following is a 521-amino-acid chain: U4/U6 small nuclear ribonucleoprotein Prp4 (521 aa).

Lys26 carries the N6-acetyllysine modification. 7 WD repeats span residues 229-268 (DDRPISYCHFSPNSKMLATACWSGLCKLWSVPDCNLLHTL), 271-318 (HNTN…VADI), 321-360 (HTVRVARVTWHPSGRFLGTTCYDRSWRLWDLEAQEEILHQ), 363-402 (HSMGVYDIAFHQDGSLAGTGGLDAFGRVWDLRTGRCIMFL), 405-444 (HLKEIYGINFSPNGYHIATGSGDNTCKVWDLRQRRCVYTI), 447-487 (HQNL…LKTL), and 490-521 (HEGKVMGLDISSDGQLIATCSYDRTFKLWMAE).

In terms of assembly, component of the precatalytic spliceosome (spliceosome B complex). Component of the U4/U6-U5 tri-snRNP complex, a building block of the precatalytic spliceosome (spliceosome B complex). The U4/U6-U5 tri-snRNP complex is composed of the U4, U6 and U5 snRNAs and at least PRPF3, PRPF4, PRPF6, PRPF8, PRPF31, SNRNP200, TXNL4A, SNRNP40, SNRPB, SNRPD1, SNRPD2, SNRPD3, SNRPE, SNRPF, SNRPG, DDX23, CD2BP2, PPIH, SNU13, EFTUD2, SART1 and USP39, plus LSM2, LSM3, LSM4, LSM5, LSM6, LSM7 and LSM8. Interacts directly with PRPF18, PPIH and PRPF3. Part of a heteromeric complex containing PPIH, PRPF3 and PRPF4 that is stable in the absence of RNA. Interacts with ERCC6.

The protein localises to the nucleus. The protein resides in the nucleus speckle. In terms of biological role, plays a role in pre-mRNA splicing as component of the U4/U6-U5 tri-snRNP complex that is involved in spliceosome assembly, and as component of the precatalytic spliceosome (spliceosome B complex). This Bos taurus (Bovine) protein is U4/U6 small nuclear ribonucleoprotein Prp4 (PRPF4).